The sequence spans 950 residues: MKLSELFNPNEFAARHLSFGDEAALLAAVGEKSMDDFVGNTLPQSIRMPSELDLPEALTEADALAKLKGIASKNVINKSYIGLGYYPTRVPNVILRNVLENPGWYTAYTPYQAEIAQGRLEALLNFQQVCIDLTGFPVAGASLLDEATAAAEAMAMAHRVGKVKSERFFVDARVYPQTLDVMKTRAKYFGFELVVSDFAQADEGEYFGALFQYVGKDGDVQDLQDVIGRLKAKGTIVAVAADIMSLVLLKSPAELGADIALGNTQRFGVPMGFGGPHAAYFAFKDEFKRSAPGRIIGVSKDASGKPALRMALSTREQHIRREKATSNICTAQALLTNLAGMYAVYHGPKGVKRIANRIHTLASVFADALVSDGLKVVHEVFFDTVTVDFGSKEKADQVFAAALESGYNLRRVNNTQVAAAFHETSVYEDLADLYRAFTGKDTFTFADDVKGRLNAELLRQDDILQHPVYNSYHTEHEMLRYLKKLEDRDLAMNRSMISLGSCTMKLNATAEMLPITWTEFSDIHPYAPEAQTAGYRELLADMENSLKAITGFDAISFQPNSGAQGEYSGMLAIRRYQEAQGEAHRNICLIPKSAHGTNPATAAMLGLKVVVVDTDEHGNVNIDDLKAKAEQHRDALSAIMITYPSTHGVYEEGIRDICRIIHENGGQVYMDGANLNAQIGIMQPAEVGADVLHMNLHKTFCIPHGGGGPGMGPIGLKAHLAPFAPGHTLTDTHSASAGQTSVAAAAFGSASILPITWMYLTMMGKQGMEQATRWALLNANYVAKRLSEDYPILYTGKNGRIAHECIVDLRPLKAESGITETDIAKRLMDYGFHAPTVSFPVAGTLMIEPTESESKAELDRFIAALKSIRREVQKVIDGEWPKDDNPLVNAPHTAADITGEWAHPYSREEAVFPLPFVREHKFWPFVNRVDDVYGDRNLVCSCPPMENYED.

N6-(pyridoxal phosphate)lysine is present on K698.

This sequence belongs to the GcvP family. The glycine cleavage system is composed of four proteins: P, T, L and H. Pyridoxal 5'-phosphate serves as cofactor.

The enzyme catalyses N(6)-[(R)-lipoyl]-L-lysyl-[glycine-cleavage complex H protein] + glycine + H(+) = N(6)-[(R)-S(8)-aminomethyldihydrolipoyl]-L-lysyl-[glycine-cleavage complex H protein] + CO2. The glycine cleavage system catalyzes the degradation of glycine. The P protein binds the alpha-amino group of glycine through its pyridoxal phosphate cofactor; CO(2) is released and the remaining methylamine moiety is then transferred to the lipoamide cofactor of the H protein. The polypeptide is Glycine dehydrogenase (decarboxylating) (Neisseria gonorrhoeae (strain NCCP11945)).